The chain runs to 515 residues: Tyrosine decarboxylase 1 (515 aa).

Repeat copies occupy residues 81–138 (DDIT…TELE) and 141–192 (VTDW…GKDQ). The tract at residues 81–192 (DDITNHIVPG…KVLNKIGKDQ (112 aa)) is 2 X approximate tandem repeats. Residue alanine 105 participates in substrate binding. Pyridoxal 5'-phosphate contacts are provided by threonine 169 and cysteine 170. Histidine 205 contacts substrate. 2 residues coordinate pyridoxal 5'-phosphate: threonine 264 and asparagine 318. Lysine 321 carries the N6-(pyridoxal phosphate)lysine modification.

It belongs to the group II decarboxylase family. The cofactor is pyridoxal 5'-phosphate. Mostly expressed in bulbs, and, to a lower extent, in stems, roots, leaves and flowers.

The catalysed reaction is L-tyrosine + H(+) = tyramine + CO2. It functions in the pathway alkaloid biosynthesis. In terms of biological role, catalyzes the decarboxylation of L-tyrosine to tyramine, which is converted to norbelladine, a precursor to all Amaryllidaceae alkaloids such as galanthamine, lycorine and haemanthamine, and including haemanthamine- and crinamine-type alkaloids, promising anticancer agents. The protein is Tyrosine decarboxylase 1 of Narcissus pseudonarcissus (Daffodil).